We begin with the raw amino-acid sequence, 351 residues long: Protein RecA (351 aa).

An ATP-binding site is contributed by 67 to 74 (GPESSGKT).

Belongs to the RecA family.

The protein localises to the cytoplasm. Its function is as follows. Can catalyze the hydrolysis of ATP in the presence of single-stranded DNA, the ATP-dependent uptake of single-stranded DNA by duplex DNA, and the ATP-dependent hybridization of homologous single-stranded DNAs. It interacts with LexA causing its activation and leading to its autocatalytic cleavage. The chain is Protein RecA from Mannheimia succiniciproducens (strain KCTC 0769BP / MBEL55E).